The chain runs to 225 residues: Ribonuclease 3 (225 aa).

Residues 4–133 enclose the RNase III domain; the sequence is FEKLEKLLGY…LIAAIYLDSN (130 aa). Residue glutamate 46 coordinates Mg(2+). Residue aspartate 50 is part of the active site. Residues asparagine 119 and glutamate 122 each coordinate Mg(2+). The active site involves glutamate 122. One can recognise a DRBM domain in the interval 158–225; that stretch reads DPKTALQEWA…AARKLLHKLK (68 aa).

The protein belongs to the ribonuclease III family. Homodimer. Mg(2+) is required as a cofactor.

The protein localises to the cytoplasm. It carries out the reaction Endonucleolytic cleavage to 5'-phosphomonoester.. In terms of biological role, digests double-stranded RNA. Involved in the processing of primary rRNA transcript to yield the immediate precursors to the large and small rRNAs (23S and 16S). Processes some mRNAs, and tRNAs when they are encoded in the rRNA operon. Processes pre-crRNA and tracrRNA of type II CRISPR loci if present in the organism. The sequence is that of Ribonuclease 3 from Rickettsia felis (strain ATCC VR-1525 / URRWXCal2) (Rickettsia azadi).